The primary structure comprises 143 residues: Large ribosomal subunit protein uL11 (143 aa).

Belongs to the universal ribosomal protein uL11 family. As to quaternary structure, part of the ribosomal stalk of the 50S ribosomal subunit. Interacts with L10 and the large rRNA to form the base of the stalk. L10 forms an elongated spine to which L12 dimers bind in a sequential fashion forming a multimeric L10(L12)X complex. Post-translationally, one or more lysine residues are methylated.

In terms of biological role, forms part of the ribosomal stalk which helps the ribosome interact with GTP-bound translation factors. This chain is Large ribosomal subunit protein uL11, found in Methylococcus capsulatus (strain ATCC 33009 / NCIMB 11132 / Bath).